Reading from the N-terminus, the 103-residue chain is Large ribosomal subunit protein bL21 (103 aa).

Belongs to the bacterial ribosomal protein bL21 family. As to quaternary structure, part of the 50S ribosomal subunit. Contacts protein L20.

In terms of biological role, this protein binds to 23S rRNA in the presence of protein L20. In Wolinella succinogenes (strain ATCC 29543 / DSM 1740 / CCUG 13145 / JCM 31913 / LMG 7466 / NCTC 11488 / FDC 602W) (Vibrio succinogenes), this protein is Large ribosomal subunit protein bL21.